Consider the following 615-residue polypeptide: UvrABC system protein C (615 aa).

The GIY-YIG domain occupies threonine 14–isoleucine 91. The UVR domain occupies asparagine 196–leucine 231.

This sequence belongs to the UvrC family. As to quaternary structure, interacts with UvrB in an incision complex.

It is found in the cytoplasm. Functionally, the UvrABC repair system catalyzes the recognition and processing of DNA lesions. UvrC both incises the 5' and 3' sides of the lesion. The N-terminal half is responsible for the 3' incision and the C-terminal half is responsible for the 5' incision. The sequence is that of UvrABC system protein C from Streptococcus pneumoniae (strain ATCC 700669 / Spain 23F-1).